The following is a 145-amino-acid chain: Basic phospholipase A2 PC17 (145 aa).

The signal sequence occupies residues 1 to 21; sequence MYPAHLLVLLAVCVSLLGASA. Positions 22-27 are excised as a propeptide; that stretch reads ISNQPR. Disulfide bonds link Cys38-Cys98, Cys54-Cys144, Cys56-Cys72, Cys71-Cys125, Cys78-Cys118, Cys87-Cys111, and Cys105-Cys116. Residues Tyr55, Gly57, and Gly59 each contribute to the Ca(2+) site. His75 is a catalytic residue. A Ca(2+)-binding site is contributed by Asp76. Residue Asp119 is part of the active site.

It belongs to the phospholipase A2 family. Group I subfamily. D49 sub-subfamily. Ca(2+) is required as a cofactor. Expressed by the venom gland.

The protein localises to the secreted. It catalyses the reaction a 1,2-diacyl-sn-glycero-3-phosphocholine + H2O = a 1-acyl-sn-glycero-3-phosphocholine + a fatty acid + H(+). Its function is as follows. Snake venom phospholipase A2 (PLA2) that inhibits neuromuscular transmission by blocking acetylcholine release from the nerve termini. PLA2 catalyzes the calcium-dependent hydrolysis of the 2-acyl groups in 3-sn-phosphoglycerides. This chain is Basic phospholipase A2 PC17, found in Laticauda colubrina (Yellow-lipped sea krait).